Here is a 407-residue protein sequence, read N- to C-terminus: Large ribosomal subunit protein uL3-like (407 aa).

A compositionally biased stretch (basic residues) spans 1–31 (MSHRKFSAPRHGHLGFLPHKRSRRHRGKVKS). Positions 1–37 (MSHRKFSAPRHGHLGFLPHKRSRRHRGKVKSWPRDDP) are disordered.

The protein belongs to the universal ribosomal protein uL3 family. In terms of assembly, component of the large ribosomal subunit (LSU). Part of a LSU subcomplex, the 5S RNP which is composed of the 5S RNA, RPL5 and RPL11. Interacts with NVL in an ATP-dependent manner. Interacts with RRP1B. Interacts with IPO5, IPO7 and KPNB1; these interactions may be involved in RPL5 nuclear import for the assembly of ribosomal subunits. Interacts with RRP1B. As to expression, expression is restricted to striated muscles.

Its function is as follows. Heart- and skeletal muscle-specific component of the ribosome, which regulates muscle function. Component of the large ribosomal subunit in striated muscle cells: replaces the RPL3 paralog in the ribosome in these cells. The ribosome is a large ribonucleoprotein complex responsible for the synthesis of proteins in the cell. Inhibits myotube growth and muscle function. This chain is Large ribosomal subunit protein uL3-like, found in Mus musculus (Mouse).